The sequence spans 109 residues: Cortistatin (109 aa).

The N-terminal stretch at 1–25 is a signal peptide; that stretch reads MMGGRGTGGKWPSAFGLLLLWGVAA. The propeptide occupies 26–93; sequence SALPLESGPT…PPPQQPPHLD (68 aa). The segment at 64 to 97 is disordered; sequence ASSSTPVGGGTPGLSKSQERPPPQQPPHLDKKPC. Cysteines 97 and 108 form a disulfide.

It belongs to the somatostatin family. Expressed in a subset of GABAergic cells in the cortex and hippocampus.

The protein localises to the secreted. This is Cortistatin (Cort) from Mus musculus (Mouse).